Here is a 155-residue protein sequence, read N- to C-terminus: Ferredoxin-6, chloroplastic (155 aa).

A chloroplast-targeting transit peptide spans M1 to A58. One can recognise a 2Fe-2S ferredoxin-type domain in the interval H61–E152. C98, C103, C106, and C136 together coordinate [2Fe-2S] cluster.

This sequence belongs to the 2Fe2S plant-type ferredoxin family. [2Fe-2S] cluster is required as a cofactor.

Its subcellular location is the plastid. The protein localises to the chloroplast. In terms of biological role, ferredoxins are iron-sulfur proteins that transfer electrons in a wide variety of metabolic reactions. In Zea mays (Maize), this protein is Ferredoxin-6, chloroplastic (FDX6).